The following is a 436-amino-acid chain: GTPase Der (436 aa).

2 consecutive EngA-type G domains span residues 4-167 (PTIA…PNEE) and 175-351 (IKFS…QSQN). GTP contacts are provided by residues 10–17 (GRPNVGKS), 57–61 (DTGGI), 119–122 (NKVD), 181–188 (GRPNVGKS), 229–233 (DTAGM), and 294–297 (NKWD). Positions 352–436 (TRIPSAVLND…PIHLIARKRK (85 aa)) constitute a KH-like domain.

Belongs to the TRAFAC class TrmE-Era-EngA-EngB-Septin-like GTPase superfamily. EngA (Der) GTPase family. As to quaternary structure, associates with the 50S ribosomal subunit.

In terms of biological role, GTPase that plays an essential role in the late steps of ribosome biogenesis. This is GTPase Der from Streptococcus gordonii (strain Challis / ATCC 35105 / BCRC 15272 / CH1 / DL1 / V288).